The primary structure comprises 389 residues: Very-long-chain 3-oxoacyl-CoA reductase (389 aa).

The helical transmembrane segment at 34 to 54 (IAVFLLAIGLFHVALKVVSYV) threads the bilayer. Positions 80, 134, 162, 239, 243, 272, and 274 each coordinate NADP(+). The active-site Proton donor is Tyr-239. Lys-243 functions as the Lowers pKa of active site Tyr in the catalytic mechanism. The tract at residues 359 to 389 (QAAGGVADPKNTTAAREGYATESLKNETLKH) is disordered.

Belongs to the short-chain dehydrogenases/reductases (SDR) family.

It is found in the endoplasmic reticulum membrane. It carries out the reaction a very-long-chain (3R)-3-hydroxyacyl-CoA + NADP(+) = a very-long-chain 3-oxoacyl-CoA + NADPH + H(+). Its pathway is lipid metabolism; fatty acid biosynthesis. Its function is as follows. Component of the microsomal membrane bound fatty acid elongation system, which produces the 26-carbon very long-chain fatty acids (VLCFA) from palmitate. Catalyzes the reduction of the 3-ketoacyl-CoA intermediate that is formed in each cycle of fatty acid elongation. VLCFAs serve as precursors for ceramide and sphingolipids. The chain is Very-long-chain 3-oxoacyl-CoA reductase from Yarrowia lipolytica (strain CLIB 122 / E 150) (Yeast).